The primary structure comprises 155 residues: Ribonuclease H (155 aa).

Residues 9–150 (DGQQVEMWTD…ADALANQGME (142 aa)) enclose the RNase H type-1 domain. D18, E56, D78, and D142 together coordinate Mg(2+).

This sequence belongs to the RNase H family. In terms of assembly, monomer. It depends on Mg(2+) as a cofactor.

Its subcellular location is the cytoplasm. It catalyses the reaction Endonucleolytic cleavage to 5'-phosphomonoester.. In terms of biological role, endonuclease that specifically degrades the RNA of RNA-DNA hybrids. This is Ribonuclease H from Bordetella pertussis (strain Tohama I / ATCC BAA-589 / NCTC 13251).